A 244-amino-acid polypeptide reads, in one-letter code: Flavin-dependent thymidylate synthase (244 aa).

A ThyX domain is found at 2–207 (VRVTLVNYTR…ELRPIIKWAK (206 aa)). Residues serine 56, 80–82 (RHR), and glutamine 88 each bind FAD. DUMP contacts are provided by residues 77–80 (QLVR), 88–92 (QQSQR), and arginine 146. The ThyX motif signature appears at 80 to 90 (RHRIASYTQQS). FAD is bound by residues 162 to 164 (NLR) and histidine 168. Residue arginine 173 participates in dUMP binding. Arginine 173 (involved in ionization of N3 of dUMP, leading to its activation) is an active-site residue.

Belongs to the thymidylate synthase ThyX family. As to quaternary structure, homotetramer. FAD serves as cofactor.

It catalyses the reaction dUMP + (6R)-5,10-methylene-5,6,7,8-tetrahydrofolate + NADPH + H(+) = dTMP + (6S)-5,6,7,8-tetrahydrofolate + NADP(+). It functions in the pathway pyrimidine metabolism; dTTP biosynthesis. Functionally, catalyzes the reductive methylation of 2'-deoxyuridine-5'-monophosphate (dUMP) to 2'-deoxythymidine-5'-monophosphate (dTMP) while utilizing 5,10-methylenetetrahydrofolate (mTHF) as the methyl donor, and NADPH and FADH(2) as the reductant. In Pyrococcus abyssi (strain GE5 / Orsay), this protein is Flavin-dependent thymidylate synthase.